Consider the following 176-residue polypeptide: Cytochrome b (176 aa).

A run of 3 helical transmembrane segments spans residues 33-53, 77-98, and 113-133; these read FGSL…FLAM, WILR…YLHV, and WNIG…GYVL. Heme b-binding residues include H83 and H97.

It belongs to the cytochrome b family. As to quaternary structure, the cytochrome bc1 complex contains 11 subunits: 3 respiratory subunits (MT-CYB, CYC1 and UQCRFS1), 2 core proteins (UQCRC1 and UQCRC2) and 6 low-molecular weight proteins (UQCRH/QCR6, UQCRB/QCR7, UQCRQ/QCR8, UQCR10/QCR9, UQCR11/QCR10 and a cleavage product of UQCRFS1). This cytochrome bc1 complex then forms a dimer. The cofactor is heme b.

Its subcellular location is the mitochondrion inner membrane. In terms of biological role, component of the ubiquinol-cytochrome c reductase complex (complex III or cytochrome b-c1 complex) that is part of the mitochondrial respiratory chain. The b-c1 complex mediates electron transfer from ubiquinol to cytochrome c. Contributes to the generation of a proton gradient across the mitochondrial membrane that is then used for ATP synthesis. The sequence is that of Cytochrome b (MT-CYB) from Myotis leibii (Eastern small-footed myotis).